A 319-amino-acid chain; its full sequence is Acetyl-coenzyme A carboxylase carboxyl transferase subunit alpha (319 aa).

Residues 39–293 enclose the CoA carboxyltransferase C-terminal domain; it reads RLQKKSNDLT…KAVLEKQLHE (255 aa).

This sequence belongs to the AccA family. Acetyl-CoA carboxylase is a heterohexamer composed of biotin carboxyl carrier protein (AccB), biotin carboxylase (AccC) and two subunits each of ACCase subunit alpha (AccA) and ACCase subunit beta (AccD).

It localises to the cytoplasm. It carries out the reaction N(6)-carboxybiotinyl-L-lysyl-[protein] + acetyl-CoA = N(6)-biotinyl-L-lysyl-[protein] + malonyl-CoA. It participates in lipid metabolism; malonyl-CoA biosynthesis; malonyl-CoA from acetyl-CoA: step 1/1. Component of the acetyl coenzyme A carboxylase (ACC) complex. First, biotin carboxylase catalyzes the carboxylation of biotin on its carrier protein (BCCP) and then the CO(2) group is transferred by the carboxyltransferase to acetyl-CoA to form malonyl-CoA. The chain is Acetyl-coenzyme A carboxylase carboxyl transferase subunit alpha from Neisseria meningitidis serogroup B (strain ATCC BAA-335 / MC58).